We begin with the raw amino-acid sequence, 275 residues long: D-apionate oxidoisomerase (275 aa).

Residues 11 to 13, glutamate 32, and aspartate 68 contribute to the NAD(+) site; that span reads GKM. Residues histidine 113 and glutamate 183 each contribute to the Zn(2+) site.

This sequence belongs to the ApnO family. It depends on Zn(2+) as a cofactor.

It carries out the reaction D-apionate + NAD(+) = 3-oxoisoapionate + NADH + H(+). Its pathway is carbohydrate metabolism. Its function is as follows. Involved in catabolism of D-apiose. Catalyzes the conversion of D-apionate to 3-oxo-isoapionate. The chain is D-apionate oxidoisomerase from Rhizobium rhizogenes (strain K84 / ATCC BAA-868) (Agrobacterium radiobacter).